The sequence spans 231 residues: Orotidine 5'-phosphate decarboxylase (231 aa).

Substrate-binding positions include D11, K33, 60–69 (DLKLHDIPNT), T119, R181, Q190, G210, and R211. K62 (proton donor) is an active-site residue.

This sequence belongs to the OMP decarboxylase family. Type 1 subfamily. As to quaternary structure, homodimer.

It catalyses the reaction orotidine 5'-phosphate + H(+) = UMP + CO2. It participates in pyrimidine metabolism; UMP biosynthesis via de novo pathway; UMP from orotate: step 2/2. In terms of biological role, catalyzes the decarboxylation of orotidine 5'-monophosphate (OMP) to uridine 5'-monophosphate (UMP). The sequence is that of Orotidine 5'-phosphate decarboxylase from Malacoplasma penetrans (strain HF-2) (Mycoplasma penetrans).